The chain runs to 356 residues: Malate dehydrogenase, glyoxysomal (356 aa).

Residues 1 to 36 constitute a glyoxysome transit peptide; sequence MEDAAAAARRMERLASHLRPPASQMEESPLLRGSNC. NAD(+) contacts are provided by residues 51–57 and Asp77; that span reads GASGGIG. Residues Arg124 and Arg130 each contribute to the substrate site. NAD(+)-binding positions include Asn137 and 160–162; that span reads ISN. The substrate site is built by Asn162 and Arg196. Residue His220 is the Proton acceptor of the active site. Met271 contributes to the NAD(+) binding site.

The protein belongs to the LDH/MDH superfamily. MDH type 1 family. In terms of assembly, homodimer.

The protein localises to the glyoxysome. It catalyses the reaction (S)-malate + NAD(+) = oxaloacetate + NADH + H(+). The sequence is that of Malate dehydrogenase, glyoxysomal from Oryza sativa subsp. japonica (Rice).